The chain runs to 93 residues: Acylphosphatase (93 aa).

The Acylphosphatase-like domain maps to 5–91 (RAHFLVKGFV…RGETTFRIRS (87 aa)). Catalysis depends on residues arginine 20 and asparagine 38.

It belongs to the acylphosphatase family.

The enzyme catalyses an acyl phosphate + H2O = a carboxylate + phosphate + H(+). This Moorella thermoacetica (strain ATCC 39073 / JCM 9320) protein is Acylphosphatase (acyP).